We begin with the raw amino-acid sequence, 120 residues long: cAMP-responsive element-binding protein-like 2 (120 aa).

The segment at 1–24 is disordered; sequence MDDSKVVGGKVKKPGKRGRKPAKI. Positions 10–21 are enriched in basic residues; it reads KVKKPGKRGRKP. The bZIP domain maps to 23–86; that stretch reads KIDLKAKLER…MAMDQGKIPS (64 aa). A basic motif region spans residues 29–60; sequence KLERSRQSARECRARKKLRYQYLEELVSSRER. The interval 62–69 is leucine-zipper; the sequence is ICALREEL. Residues 93 to 120 are disordered; sequence TGEEQSKSQQNSSRHMKAGKTDANSNSW.

This sequence belongs to the bZIP family. ATF subfamily. As to quaternary structure, interacts with CREB1; regulates CREB1 phosphorylation, stability and transcriptional activity. Interacts with immediate-early (IE) protein BICP22 of bovine herpesvirus-1 (BHV-1). In terms of processing, phosphorylated by AMPK.

It localises to the nucleus. In terms of biological role, probable regulator of CREB1 transcriptional activity which is involved in adipose cells differentiation. May also play a regulatory role in the cell cycle. The sequence is that of cAMP-responsive element-binding protein-like 2 (CREBL2) from Bos taurus (Bovine).